Reading from the N-terminus, the 78-residue chain is Large ribosomal subunit protein bL28 (78 aa).

The protein belongs to the bacterial ribosomal protein bL28 family.

In Salmonella choleraesuis (strain SC-B67), this protein is Large ribosomal subunit protein bL28.